A 550-amino-acid chain; its full sequence is 4-coumarate--CoA ligase-like 8 (550 aa).

ATP-binding residues include S207, S208, G209, T210, T211, and K215. (E)-4-coumaroyl-AMP is bound at residue F253. CoA is bound at residue R274. The SBD1 stretch occupies residues D276–Q347. Residues G325, Q347, G348, and T352 each contribute to the (E)-4-coumaroyl-AMP site. ATP-binding residues include Q347, G348, T352, D430, and R445. Residues G348 to Y412 form an SBD2 region. The (E)-4-coumaroyl-AMP site is built by K447 and K451. CoA is bound by residues K453 and G454. K536 provides a ligand contact to ATP. A Microbody targeting signal motif is present at residues S548 to I550.

The protein belongs to the ATP-dependent AMP-binding enzyme family. The cofactor is Mg(2+).

The protein resides in the peroxisome. The catalysed reaction is (E)-4-coumarate + ATP + CoA = (E)-4-coumaroyl-CoA + AMP + diphosphate. It carries out the reaction (E)-4-coumarate + ATP + H(+) = (E)-4-coumaroyl-AMP + diphosphate. The enzyme catalyses (E)-4-coumaroyl-AMP + CoA = (E)-4-coumaroyl-CoA + AMP + H(+). Functionally, carboxylate--CoA ligase that may use 4-coumarate as substrate. Follows a two-step reaction mechanism, wherein the carboxylate substrate first undergoes adenylation by ATP, followed by a thioesterification in the presence of CoA to yield the final CoA thioester. This is 4-coumarate--CoA ligase-like 8 from Arabidopsis thaliana (Mouse-ear cress).